The sequence spans 311 residues: Transcriptional regulatory protein MoaR1 (311 aa).

The segment at residues 15-117 (LNATTAGAVQ…SEPPGYRLLI (103 aa)) is a DNA-binding region (ompR/PhoB-type).

The protein belongs to the AfsR/DnrI/RedD regulatory family.

Acts as a positive transcriptional regulator of the molybdopterin biosynthesis moa1 locus, promoting the expression of the moaA1B1C1D1 genes. Binds directly to the moaA1 promoter. The sequence is that of Transcriptional regulatory protein MoaR1 (moaR1) from Mycobacterium tuberculosis (strain ATCC 25618 / H37Rv).